Reading from the N-terminus, the 412-residue chain is Serine hydroxymethyltransferase (412 aa).

(6S)-5,6,7,8-tetrahydrofolate-binding positions include Leu-116 and 120-122 (GHL). Lys-225 bears the N6-(pyridoxal phosphate)lysine mark. (6S)-5,6,7,8-tetrahydrofolate is bound by residues Glu-241 and 350-352 (SPF).

This sequence belongs to the SHMT family. As to quaternary structure, homodimer. Pyridoxal 5'-phosphate serves as cofactor.

It is found in the cytoplasm. It carries out the reaction (6R)-5,10-methylene-5,6,7,8-tetrahydrofolate + glycine + H2O = (6S)-5,6,7,8-tetrahydrofolate + L-serine. The protein operates within one-carbon metabolism; tetrahydrofolate interconversion. It functions in the pathway amino-acid biosynthesis; glycine biosynthesis; glycine from L-serine: step 1/1. Functionally, catalyzes the reversible interconversion of serine and glycine with tetrahydrofolate (THF) serving as the one-carbon carrier. This reaction serves as the major source of one-carbon groups required for the biosynthesis of purines, thymidylate, methionine, and other important biomolecules. Also exhibits THF-independent aldolase activity toward beta-hydroxyamino acids, producing glycine and aldehydes, via a retro-aldol mechanism. The polypeptide is Serine hydroxymethyltransferase (Enterococcus faecalis (strain ATCC 700802 / V583)).